Here is a 911-residue protein sequence, read N- to C-terminus: DNA polymerase I (911 aa).

The region spanning 186–280 (VTPAQYPDLA…DTLRLQPWDR (95 aa)) is the 5'-3' exonuclease domain. The 3'-5' exonuclease domain occupies 320–497 (RGGLLESGTV…LAAALDAELD (178 aa)).

The protein belongs to the DNA polymerase type-A family. In terms of assembly, single-chain monomer with multiple functions.

The enzyme catalyses DNA(n) + a 2'-deoxyribonucleoside 5'-triphosphate = DNA(n+1) + diphosphate. In addition to polymerase activity, this DNA polymerase exhibits 3'-5' and 5'-3' exonuclease activity. The polypeptide is DNA polymerase I (polA) (Mycobacterium leprae (strain TN)).